A 427-amino-acid polypeptide reads, in one-letter code: Imidazolonepropionase (427 aa).

The Fe(3+) site is built by His81 and His83. His81 and His83 together coordinate Zn(2+). Residues Arg90, Tyr153, and His186 each contribute to the 4-imidazolone-5-propanoate site. N-formimidoyl-L-glutamate is bound at residue Tyr153. His260 is a binding site for Fe(3+). Position 260 (His260) interacts with Zn(2+). Glu263 contacts 4-imidazolone-5-propanoate. A Fe(3+)-binding site is contributed by Asp335. Asp335 lines the Zn(2+) pocket. N-formimidoyl-L-glutamate is bound by residues Asn337 and Gly339. Ser340 contributes to the 4-imidazolone-5-propanoate binding site.

The protein belongs to the metallo-dependent hydrolases superfamily. HutI family. The cofactor is Zn(2+). Requires Fe(3+) as cofactor.

Its subcellular location is the cytoplasm. It carries out the reaction 4-imidazolone-5-propanoate + H2O = N-formimidoyl-L-glutamate. It participates in amino-acid degradation; L-histidine degradation into L-glutamate; N-formimidoyl-L-glutamate from L-histidine: step 3/3. Catalyzes the hydrolytic cleavage of the carbon-nitrogen bond in imidazolone-5-propanoate to yield N-formimidoyl-L-glutamate. It is the third step in the universal histidine degradation pathway. This chain is Imidazolonepropionase, found in Chloroflexus aggregans (strain MD-66 / DSM 9485).